The chain runs to 379 residues: Lipoyl synthase 1, mitochondrial (379 aa).

7 residues coordinate [4Fe-4S] cluster: cysteine 106, cysteine 111, cysteine 117, cysteine 137, cysteine 141, cysteine 144, and serine 352. Residues 122 to 341 enclose the Radical SAM core domain; the sequence is EHGTQTATIM…EERGNELGFL (220 aa).

It belongs to the radical SAM superfamily. Lipoyl synthase family. [4Fe-4S] cluster serves as cofactor.

The protein resides in the mitochondrion. It catalyses the reaction [[Fe-S] cluster scaffold protein carrying a second [4Fe-4S](2+) cluster] + N(6)-octanoyl-L-lysyl-[protein] + 2 oxidized [2Fe-2S]-[ferredoxin] + 2 S-adenosyl-L-methionine + 4 H(+) = [[Fe-S] cluster scaffold protein] + N(6)-[(R)-dihydrolipoyl]-L-lysyl-[protein] + 4 Fe(3+) + 2 hydrogen sulfide + 2 5'-deoxyadenosine + 2 L-methionine + 2 reduced [2Fe-2S]-[ferredoxin]. Its pathway is protein modification; protein lipoylation via endogenous pathway; protein N(6)-(lipoyl)lysine from octanoyl-[acyl-carrier-protein]: step 2/2. Catalyzes the radical-mediated insertion of two sulfur atoms into the C-6 and C-8 positions of the octanoyl moiety bound to the lipoyl domains of lipoate-dependent enzymes, thereby converting the octanoylated domains into lipoylated derivatives. The polypeptide is Lipoyl synthase 1, mitochondrial (Drosophila yakuba (Fruit fly)).